A 128-amino-acid polypeptide reads, in one-letter code: Fluoride-specific ion channel FluC (128 aa).

Transmembrane regions (helical) follow at residues 5–25 (IVAI…LSLA), 35–55 (LGTL…AVVF), 67–87 (LFVI…SVEV), and 96–116 (FGWA…LTAL). Na(+)-binding residues include glycine 75 and threonine 78.

Belongs to the fluoride channel Fluc/FEX (TC 1.A.43) family.

It localises to the cell inner membrane. The enzyme catalyses fluoride(in) = fluoride(out). With respect to regulation, na(+) is not transported, but it plays an essential structural role and its presence is essential for fluoride channel function. Functionally, fluoride-specific ion channel. Important for reducing fluoride concentration in the cell, thus reducing its toxicity. In Burkholderia lata (strain ATCC 17760 / DSM 23089 / LMG 22485 / NCIMB 9086 / R18194 / 383), this protein is Fluoride-specific ion channel FluC.